We begin with the raw amino-acid sequence, 83 residues long: Alpha-toxin CvIV4 (83 aa).

Positions 1–19 (MNYFILILVAALLILDVNC) are cleaved as a signal peptide. The region spanning 21 to 79 (KDGYPVEHSGCKYTCWKNEYCDKVCKDLKGEGGYCYINLTCWCTGLPDNVPLKTNQRCN) is the LCN-type CS-alpha/beta domain. 4 disulfide bridges follow: Cys-31–Cys-78, Cys-35–Cys-55, Cys-41–Cys-61, and Cys-45–Cys-63.

This sequence belongs to the long (4 C-C) scorpion toxin superfamily. Sodium channel inhibitor family. In terms of tissue distribution, expressed by the venom gland.

It is found in the secreted. In terms of biological role, this toxin significantly slows the fast inactivation of Nav1.2/SCN2A (EC(50)=580 nM), Nav1.3/SCN3A (EC(50)=1310 nM), Nav1.4/SCN4A (EC(50)=530 nM), and Nav1.7/SCN9A (EC(50)=1340 nM). The toxin does not affect the peak amplitude of Nav1.7 currents. On all channels cited above, the toxin requires depolarizing potentials to slow channel inactivation. In addition, the toxin has no or very weak effects on the voltage-dependence of steady-state inactivation, and on voltage-dependence of activation. In vivo, it produces paw licking in mice equivalent to the effects of whole venom. The protein is Alpha-toxin CvIV4 of Centruroides vittatus (Striped bark scorpion).